A 311-amino-acid chain; its full sequence is Ribosomal RNA small subunit methyltransferase H (311 aa).

S-adenosyl-L-methionine is bound by residues 33–35, Asp53, Phe80, Asp101, and Gln108; that span reads AGH.

The protein belongs to the methyltransferase superfamily. RsmH family.

Its subcellular location is the cytoplasm. The enzyme catalyses cytidine(1402) in 16S rRNA + S-adenosyl-L-methionine = N(4)-methylcytidine(1402) in 16S rRNA + S-adenosyl-L-homocysteine + H(+). Functionally, specifically methylates the N4 position of cytidine in position 1402 (C1402) of 16S rRNA. In Alkaliphilus oremlandii (strain OhILAs) (Clostridium oremlandii (strain OhILAs)), this protein is Ribosomal RNA small subunit methyltransferase H.